Reading from the N-terminus, the 28-residue chain is Phospholipase A2 2 (28 aa).

It belongs to the phospholipase A2 family. Group I subfamily. Ca(2+) serves as cofactor. In terms of tissue distribution, expressed by the venom gland.

It is found in the secreted. The enzyme catalyses a 1,2-diacyl-sn-glycero-3-phosphocholine + H2O = a 1-acyl-sn-glycero-3-phosphocholine + a fatty acid + H(+). In terms of biological role, snake venom phospholipase A2 (PLA2) that inhibits neuromuscular transmission by blocking acetylcholine release from the nerve termini. PLA2 catalyzes the calcium-dependent hydrolysis of the 2-acyl groups in 3-sn-phosphoglycerides. In Micrurus nigrocinctus (Central American coral snake), this protein is Phospholipase A2 2.